Consider the following 1036-residue polypeptide: PDZ domain-containing RING finger protein 4 (1036 aa).

The RING-type; degenerate zinc finger occupies 18–56; it reads CKLCGQVLEEPLCTPCGHVFCASCLLPWAVRRRRCPLQC. The span at 129–160 shows a compositional bias: gly residues; the sequence is ARGGCGPTPRAGRGGGARGGPPGGRWGRGRGP. The disordered stretch occupies residues 129–161; the sequence is ARGGCGPTPRAGRGGGARGGPPGGRWGRGRGPG. 2 PDZ domains span residues 224 to 314 and 402 to 486; these read TIVL…LRRT and EVEL…VARP. Residues 515–590 are disordered; it reads HNEAMQPTAN…SLKSKRDLGQ (76 aa). A compositionally biased stretch (basic and acidic residues) spans 548-566; it reads NHEKDSGVGRTDESLRNDE. Residues 655–689 adopt a coiled-coil conformation; that stretch reads NQGEQEGVEHELQLLNEELRNIELECQNIMQAHRL. Over residues 726 to 735 the composition is skewed to basic and acidic residues; that stretch reads EHPEKSDKDS. The tract at residues 726 to 819 is disordered; it reads EHPEKSDKDS…VLEGSKLPDQ (94 aa). Residues 736–750 are compositionally biased toward polar residues; it reads SSAYNTAESCRSTPL. Over residues 774 to 799 the composition is skewed to low complexity; it reads STMAATQSSSGQSSKESTSTKAKTTE. The segment covering 805–819 has biased composition (basic and acidic residues); sequence ESKEKVLEGSKLPDQ.

The protein is PDZ domain-containing RING finger protein 4 (PDZRN4) of Homo sapiens (Human).